A 399-amino-acid chain; its full sequence is S-adenosylmethionine synthase (399 aa).

Residue His-16 participates in ATP binding. Mg(2+) is bound at residue Asp-18. Glu-44 is a K(+) binding site. Glu-57 and Gln-100 together coordinate L-methionine. A flexible loop region spans residues 100–110 (QSSDIAQGVNE). Residues 177–179 (DAK), 244–245 (RF), Asp-253, 259–260 (RK), Ala-276, and Lys-280 contribute to the ATP site. Position 253 (Asp-253) interacts with L-methionine. L-methionine is bound at residue Lys-284.

Belongs to the AdoMet synthase family. Homotetramer; dimer of dimers. Mg(2+) is required as a cofactor. Requires K(+) as cofactor.

The protein resides in the cytoplasm. The enzyme catalyses L-methionine + ATP + H2O = S-adenosyl-L-methionine + phosphate + diphosphate. It participates in amino-acid biosynthesis; S-adenosyl-L-methionine biosynthesis; S-adenosyl-L-methionine from L-methionine: step 1/1. Catalyzes the formation of S-adenosylmethionine (AdoMet) from methionine and ATP. The overall synthetic reaction is composed of two sequential steps, AdoMet formation and the subsequent tripolyphosphate hydrolysis which occurs prior to release of AdoMet from the enzyme. The sequence is that of S-adenosylmethionine synthase from Lactococcus lactis subsp. lactis (strain IL1403) (Streptococcus lactis).